A 360-amino-acid polypeptide reads, in one-letter code: Lactosylceramide 4-alpha-galactosyltransferase (360 aa).

Topologically, residues Met1 to Arg30 are cytoplasmic. A helical; Signal-anchor for type II membrane protein membrane pass occupies residues Val31–Trp51. Residues His52–Leu360 lie on the Lumenal side of the membrane. Positions Asp199–Asp201 match the DXD motif motif. Asn210 and Asn316 each carry an N-linked (GlcNAc...) asparagine glycan.

Belongs to the glycosyltransferase 32 family. As to expression, ubiquitous. Highly expressed in kidney, mesenteric lymph node, spleen and brain.

It is found in the golgi apparatus membrane. It catalyses the reaction a beta-D-Gal-(1-&gt;4)-beta-D-Glc-(1&lt;-&gt;1)-Cer(d18:1(4E)) + UDP-alpha-D-galactose = a globoside Gb3Cer (d18:1(4E)) + UDP + H(+). It carries out the reaction a beta-D-Gal-(1&lt;-&gt;1')-ceramide + UDP-alpha-D-galactose = alpha-D-Gal-(1-&gt;4)-beta-D-Gal-(1&lt;-&gt;1')-Cer + UDP + H(+). It functions in the pathway glycolipid biosynthesis. Catalyzes the transfer of galactose from UDP-alpha-D-galactose to lactosylceramide/beta-D-galactosyl-(1-&gt;4)-beta-D-glucosyl-(1&lt;-&gt;1)-ceramide(d18:1(4E)) to produce globotriaosylceramide/globoside Gb3Cer (d18:1(4E)). Also able to transfer galactose to galactosylceramide/beta-D-Gal-(1&lt;-&gt;1')-Cer. Globoside Gb3Cer is a glycosphingolipid of the globo serie, one of the major types of neutral root structures of glycosphingolipids, that constitute a significant portion of mammalian cell membranes. The chain is Lactosylceramide 4-alpha-galactosyltransferase from Rattus norvegicus (Rat).